Consider the following 307-residue polypeptide: tRNA(Met) cytidine acetate ligase (307 aa).

ATP contacts are provided by residues 12 to 25 (VVEY…HIYQ), glycine 106, asparagine 163, and arginine 188.

The protein belongs to the TmcAL family.

It localises to the cytoplasm. The catalysed reaction is cytidine(34) in elongator tRNA(Met) + acetate + ATP = N(4)-acetylcytidine(34) in elongator tRNA(Met) + AMP + diphosphate. Catalyzes the formation of N(4)-acetylcytidine (ac(4)C) at the wobble position of elongator tRNA(Met), using acetate and ATP as substrates. First activates an acetate ion to form acetyladenylate (Ac-AMP) and then transfers the acetyl group to tRNA to form ac(4)C34. This Mycoplasmopsis synoviae (strain 53) (Mycoplasma synoviae) protein is tRNA(Met) cytidine acetate ligase.